The sequence spans 206 residues: Recombination protein RecR (206 aa).

The C4-type zinc finger occupies 60 to 75 (CAMCNTFCEGGLCDIC). In terms of domain architecture, Toprim spans 83–178 (RRLMVVHMPA…KVSRLSQGIP (96 aa)).

The protein belongs to the RecR family.

Functionally, may play a role in DNA repair. It seems to be involved in an RecBC-independent recombinational process of DNA repair. It may act with RecF and RecO. The chain is Recombination protein RecR from Neisseria meningitidis serogroup B (strain ATCC BAA-335 / MC58).